The primary structure comprises 209 residues: Probable GTP-binding protein EngB (209 aa).

In terms of domain architecture, EngB-type G spans 24–198 (EGMEVAFAGR…HGILDQWLGL (175 aa)). Residues 32-39 (GRSNAGKS), 59-63 (GRTQL), 77-80 (DLPG), 144-147 (TKAD), and 177-179 (FSA) contribute to the GTP site. Mg(2+)-binding residues include Ser-39 and Thr-61.

Belongs to the TRAFAC class TrmE-Era-EngA-EngB-Septin-like GTPase superfamily. EngB GTPase family. Mg(2+) is required as a cofactor.

Its function is as follows. Necessary for normal cell division and for the maintenance of normal septation. The chain is Probable GTP-binding protein EngB from Thioalkalivibrio sulfidiphilus (strain HL-EbGR7).